The primary structure comprises 299 residues: Inosose dehydratase (299 aa).

Belongs to the IolE/MocC family. The cofactor is glutathione. Requires Co(2+) as cofactor. It depends on Mn(2+) as a cofactor.

It carries out the reaction scyllo-inosose = 3D-3,5/4-trihydroxycyclohexane-1,2-dione + H2O. Functionally, catalyzes the dehydration of inosose (2-keto-myo-inositol, 2KMI or 2,4,6/3,5-pentahydroxycyclohexanone) to 3D-(3,5/4)-trihydroxycyclohexane-1,2-dione (D-2,3-diketo-4-deoxy-epi-inositol). The sequence is that of Inosose dehydratase from Klebsiella pneumoniae (strain 342).